The sequence spans 145 residues: D-aminoacyl-tRNA deacylase (145 aa).

Residues 137 to 138 (GP) carry the Gly-cisPro motif, important for rejection of L-amino acids motif.

It belongs to the DTD family. Homodimer.

The protein localises to the cytoplasm. The enzyme catalyses glycyl-tRNA(Ala) + H2O = tRNA(Ala) + glycine + H(+). It catalyses the reaction a D-aminoacyl-tRNA + H2O = a tRNA + a D-alpha-amino acid + H(+). Functionally, an aminoacyl-tRNA editing enzyme that deacylates mischarged D-aminoacyl-tRNAs. Also deacylates mischarged glycyl-tRNA(Ala), protecting cells against glycine mischarging by AlaRS. Acts via tRNA-based rather than protein-based catalysis; rejects L-amino acids rather than detecting D-amino acids in the active site. By recycling D-aminoacyl-tRNA to D-amino acids and free tRNA molecules, this enzyme counteracts the toxicity associated with the formation of D-aminoacyl-tRNA entities in vivo and helps enforce protein L-homochirality. The polypeptide is D-aminoacyl-tRNA deacylase (Pseudomonas aeruginosa (strain LESB58)).